A 453-amino-acid chain; its full sequence is 3-phosphoshikimate 1-carboxyvinyltransferase (453 aa).

Residues 1-27 (MSHDSEPQPVTATPGGPLNGSLKPPGD) form a disordered region. 3 residues coordinate 3-phosphoshikimate: lysine 28, serine 29, and arginine 33. Position 28 (lysine 28) interacts with phosphoenolpyruvate. 2 residues coordinate phosphoenolpyruvate: glycine 101 and arginine 129. Residues serine 175, glutamine 177, aspartate 330, and lysine 357 each contribute to the 3-phosphoshikimate site. Position 177 (glutamine 177) interacts with phosphoenolpyruvate. The Proton acceptor role is filled by aspartate 330. Positions 361 and 405 each coordinate phosphoenolpyruvate.

This sequence belongs to the EPSP synthase family. Monomer.

It localises to the cytoplasm. The catalysed reaction is 3-phosphoshikimate + phosphoenolpyruvate = 5-O-(1-carboxyvinyl)-3-phosphoshikimate + phosphate. Its pathway is metabolic intermediate biosynthesis; chorismate biosynthesis; chorismate from D-erythrose 4-phosphate and phosphoenolpyruvate: step 6/7. Catalyzes the transfer of the enolpyruvyl moiety of phosphoenolpyruvate (PEP) to the 5-hydroxyl of shikimate-3-phosphate (S3P) to produce enolpyruvyl shikimate-3-phosphate and inorganic phosphate. The polypeptide is 3-phosphoshikimate 1-carboxyvinyltransferase (Methylorubrum extorquens (strain CM4 / NCIMB 13688) (Methylobacterium extorquens)).